The primary structure comprises 384 residues: DNA replication and repair protein RecF (384 aa).

An ATP-binding site is contributed by 30 to 37 (GNNAQGKS).

It belongs to the RecF family.

It is found in the cytoplasm. The RecF protein is involved in DNA metabolism; it is required for DNA replication and normal SOS inducibility. RecF binds preferentially to single-stranded, linear DNA. It also seems to bind ATP. This chain is DNA replication and repair protein RecF, found in Gloeothece citriformis (strain PCC 7424) (Cyanothece sp. (strain PCC 7424)).